The primary structure comprises 148 residues: Protein-arginine-phosphatase (148 aa).

Catalysis depends on Cys9, which acts as the Nucleophile. Residue 10–15 (TGNTCR) coordinates substrate. Arg15 is a catalytic residue. Asp117 acts as the Proton donor in catalysis.

Belongs to the low molecular weight phosphotyrosine protein phosphatase family. In terms of assembly, is present in solution as a mixture of monomers, dimers and higher order oligomers (trimers and tetramers).

The catalysed reaction is N(omega)-phospho-L-arginyl-[protein] + H2O = L-arginyl-[protein] + phosphate. Irreversibly inhibited by the synthetic inhibitor cyc-SeCN-amidine, which inactivates the enzyme by inducing disulfide bond formation between the two active site cysteine residues Cys-9 and Cys-14. Catalyzes the specific dephosphorylation of phosphoarginine residues in proteins. Probably counteracts the protein arginine kinase McsB in vivo. Exhibits almost no activity against pTyr peptides. Protein arginine phosphorylation has a physiologically important role and is involved in the regulation of many critical cellular processes, such as protein homeostasis, motility, competence, and stringent and stress responses, by regulating gene expression and protein activity. The chain is Protein-arginine-phosphatase (ywle) from Geobacillus stearothermophilus (Bacillus stearothermophilus).